The sequence spans 81 residues: MAGNTGERPFVDIITSVRYWVIHALTIPALFLAGWLFVSTGLAYDIFGTPRPNEYFTAERQELPIVSDRFNALEQLEKLTR.

Residues 21–35 (VIHALTIPALFLAGW) traverse the membrane as a helical segment. Residue H23 participates in heme binding.

Belongs to the PsbE/PsbF family. In terms of assembly, heterodimer of an alpha subunit and a beta subunit. PSII is composed of 1 copy each of membrane proteins PsbA, PsbB, PsbC, PsbD, PsbE, PsbF, PsbH, PsbI, PsbJ, PsbK, PsbL, PsbM, PsbT, PsbX, PsbY, PsbZ, Psb30/Ycf12, peripheral proteins PsbO, CyanoQ (PsbQ), PsbU, PsbV and a large number of cofactors. It forms dimeric complexes. The cofactor is heme b.

Its subcellular location is the cellular thylakoid membrane. This b-type cytochrome is tightly associated with the reaction center of photosystem II (PSII). PSII is a light-driven water:plastoquinone oxidoreductase that uses light energy to abstract electrons from H(2)O, generating O(2) and a proton gradient subsequently used for ATP formation. It consists of a core antenna complex that captures photons, and an electron transfer chain that converts photonic excitation into a charge separation. The protein is Cytochrome b559 subunit alpha of Synechococcus sp. (strain JA-3-3Ab) (Cyanobacteria bacterium Yellowstone A-Prime).